A 614-amino-acid chain; its full sequence is Acetylcholinesterase (614 aa).

Positions 1–31 (MRPPWYPLHTPSLASPLLFLLLSLLGGGARA) are cleaved as a signal peptide. A disulfide bridge links C100 with C127. S234 functions as the Acyl-ester intermediate in the catalytic mechanism. C288 and C303 form a disulfide bridge. N296 carries N-linked (GlcNAc...) asparagine glycosylation. Catalysis depends on E365, which acts as the Charge relay system. An N-linked (GlcNAc...) asparagine glycan is attached at N381. The cysteines at positions 440 and 560 are disulfide-linked. H478 acts as the Charge relay system in catalysis. A glycan (N-linked (GlcNAc...) asparagine) is linked at N495.

It belongs to the type-B carboxylesterase/lipase family. As to quaternary structure, homotetramer; composed of disulfide-linked homodimers. Catalytic forms H (GPI-anchor dimer) and T (asymmetric collagen-tailed), which differ in their C-terminus, account for all types of known ACHE forms. Interacts with PRIMA1. The interaction with PRIMA1 is required to anchor it to the basal lamina of cells and organize into tetramers. In terms of tissue distribution, has been found in central nervous system and muscle. Found in embryonic liver and spleen but not in adult liver.

Its subcellular location is the synapse. The protein localises to the secreted. It localises to the cell membrane. The enzyme catalyses acetylcholine + H2O = choline + acetate + H(+). Its function is as follows. Terminates signal transduction at the neuromuscular junction by rapid hydrolysis of the acetylcholine released into the synaptic cleft. The polypeptide is Acetylcholinesterase (Ache) (Rattus norvegicus (Rat)).